A 446-amino-acid polypeptide reads, in one-letter code: N-succinylarginine dihydrolase (446 aa).

Substrate is bound by residues 21 to 30 (AGLSWGNVAS), asparagine 112, and 139 to 140 (HR). Glutamate 176 is a catalytic residue. A substrate-binding site is contributed by arginine 216. Histidine 252 is an active-site residue. Residues aspartate 254 and asparagine 364 each contribute to the substrate site. Cysteine 370 functions as the Nucleophile in the catalytic mechanism.

The protein belongs to the succinylarginine dihydrolase family. As to quaternary structure, homodimer.

It carries out the reaction N(2)-succinyl-L-arginine + 2 H2O + 2 H(+) = N(2)-succinyl-L-ornithine + 2 NH4(+) + CO2. The protein operates within amino-acid degradation; L-arginine degradation via AST pathway; L-glutamate and succinate from L-arginine: step 2/5. In terms of biological role, catalyzes the hydrolysis of N(2)-succinylarginine into N(2)-succinylornithine, ammonia and CO(2). The sequence is that of N-succinylarginine dihydrolase from Marinobacter nauticus (strain ATCC 700491 / DSM 11845 / VT8) (Marinobacter aquaeolei).